The sequence spans 431 residues: Cyclin-B2-4 (431 aa).

Residues 1 to 30 (MGGSDENRHGVIGPMNRQQGGLRGGKVIPT) are disordered.

The protein belongs to the cyclin family. Cyclin AB subfamily. In terms of assembly, interacts with SMR11.

The protein is Cyclin-B2-4 (CYCB2-4) of Arabidopsis thaliana (Mouse-ear cress).